We begin with the raw amino-acid sequence, 419 residues long: Putative zinc metalloprotease spyM18_2031 (419 aa).

Residue H18 participates in Zn(2+) binding. Residue E19 is part of the active site. Position 22 (H22) interacts with Zn(2+). Transmembrane regions (helical) follow at residues 169-191 (LITNFAGPMNNFILGIVVFILLV), 301-323 (LAWSGAFTILNALKGLITGFSLN), 343-365 (LESVLSLMAMLSINLGIFNLIPI), and 392-411 (AYITLAGVAIMVVLMIAVTW). Residues 175–274 (GPMNNFILGI…LKTVAVKPQK (100 aa)) enclose the PDZ domain.

This sequence belongs to the peptidase M50B family. Requires Zn(2+) as cofactor.

The protein localises to the cell membrane. In Streptococcus pyogenes serotype M18 (strain MGAS8232), this protein is Putative zinc metalloprotease spyM18_2031.